Here is a 337-residue protein sequence, read N- to C-terminus: Dimethyladenosine transferase 1, mitochondrial (337 aa).

Residues 1–84 (MSQVTARVLN…RSILRRQPQR (84 aa)) constitute a mitochondrion transit peptide. Residues 38–41 (QNFL), asparagine 39, leucine 41, glycine 67, glutamate 89, aspartate 118, and asparagine 140 each bind S-adenosyl-L-methionine.

It belongs to the class I-like SAM-binding methyltransferase superfamily. rRNA adenine N(6)-methyltransferase family. KsgA subfamily.

It is found in the mitochondrion. Functionally, probable S-adenosyl-L-methionine-dependent methyltransferase which specifically dimethylates mitochondrial 12S rRNA at the conserved stem loop. This Drosophila pseudoobscura pseudoobscura (Fruit fly) protein is Dimethyladenosine transferase 1, mitochondrial (mtTFB1).